We begin with the raw amino-acid sequence, 1059 residues long: Protein cappuccino (1059 aa).

Polar residues-rich tracts occupy residues 62–80 (AAVTQTPPGVTSSTPNESG) and 90–123 (ATTSSPSLETQSTVIISFKSSQTPVQSQTNSAAS). 2 disordered regions span residues 62 to 146 (AAVT…GTPT) and 448 to 647 (QTES…TAPP). The span at 133 to 142 (LPLPPPPPGF) shows a compositional bias: pro residues. A compositionally biased stretch (basic and acidic residues) spans 468–481 (SDNESAKEDGEKPH). Residues 480-560 (PHAVAPPPPP…PPPPMSASPS (81 aa)) form the FH1 domain. Positions 483-541 (VAPPPPPPPPPLHAFVAPPPPPPPPPPPPPPLANYGAPPPPPPPPPGSGSAPPPPPPAP) are enriched in pro residues. The region spanning 585 to 1032 (RKSAVNPPKP…KKSKQAQIES (448 aa)) is the FH2 domain. Positions 620–629 (TDSTENSGSS) are enriched in polar residues. Residues 1049–1059 (KERMLMRRSKN) are important for interaction with spir.

Belongs to the formin homology family. Cappuccino subfamily. As to quaternary structure, interacts with wash. Interacts with spir.

It localises to the cytoplasm. Its subcellular location is the cytoskeleton. The protein localises to the cytosol. The protein resides in the membrane. It is found in the cytoplasmic vesicle membrane. In terms of biological role, acts as an actin nucleation factor and promotes assembly of actin filaments together with spir. May play a role in intracellular vesicle transport along actin fibers, providing a novel link between actin cytoskeleton dynamics and intracellular transport. This chain is Protein cappuccino (capu), found in Drosophila melanogaster (Fruit fly).